A 330-amino-acid chain; its full sequence is UDP-glucose 4-epimerase (330 aa).

NAD(+) contacts are provided by residues 11-12, 31-36, 51-52, 73-77, Asn92, Ser117, Tyr141, Lys145, and Phe169; these read YI, DALYTG, DI, and FAAYS. Ser117 and Tyr141 together coordinate substrate. Tyr141 acts as the Proton acceptor in catalysis. Substrate is bound by residues Asn170, 189 to 190, 206 to 208, Arg221, and 282 to 285; these read HL, TIF, and RGGD.

Belongs to the NAD(P)-dependent epimerase/dehydratase family. Homodimer. Requires NAD(+) as cofactor.

The enzyme catalyses UDP-alpha-D-glucose = UDP-alpha-D-galactose. Its pathway is carbohydrate metabolism; galactose metabolism. Involved in the metabolism of galactose. Catalyzes the conversion of UDP-galactose (UDP-Gal) to UDP-glucose (UDP-Glc) through a mechanism involving the transient reduction of NAD. It also could be involved in preparation of carbohydrate residues for incorporation into complex polymers, such as exopolysaccharides. The polypeptide is UDP-glucose 4-epimerase (galE) (Lactobacillus helveticus (Lactobacillus suntoryeus)).